The following is a 387-amino-acid chain: GTPase Obg (387 aa).

The 159-residue stretch at 1–159 folds into the Obg domain; the sequence is MKFVDEVEIR…RSLKLELLLL (159 aa). In terms of domain architecture, OBG-type G spans 160-333; sequence ADVGLLGLPN…LTQKVMTFIE (174 aa). GTP contacts are provided by residues 166 to 173, 191 to 195, 213 to 216, 283 to 286, and 314 to 316; these read GLPNAGKS, FTTLV, DIPG, NKLD, and SAF. 2 residues coordinate Mg(2+): serine 173 and threonine 193. A disordered region spans residues 361–387; sequence AAHSQDDDLDDDDWDEDDYDVEVEYRQ. The segment covering 367–387 has biased composition (acidic residues); the sequence is DDLDDDDWDEDDYDVEVEYRQ.

Belongs to the TRAFAC class OBG-HflX-like GTPase superfamily. OBG GTPase family. In terms of assembly, monomer. The cofactor is Mg(2+).

Its subcellular location is the cytoplasm. Its function is as follows. An essential GTPase which binds GTP, GDP and possibly (p)ppGpp with moderate affinity, with high nucleotide exchange rates and a fairly low GTP hydrolysis rate. Plays a role in control of the cell cycle, stress response, ribosome biogenesis and in those bacteria that undergo differentiation, in morphogenesis control. The protein is GTPase Obg of Colwellia psychrerythraea (strain 34H / ATCC BAA-681) (Vibrio psychroerythus).